The sequence spans 398 residues: Probable beta-1,3-galactosyltransferase 5 (398 aa).

Residues 11–31 (LTMTWVPLLCISCFFLGAIFT) traverse the membrane as a helical; Signal-anchor for type II membrane protein segment. N110, N115, and N206 each carry an N-linked (GlcNAc...) asparagine glycan.

This sequence belongs to the glycosyltransferase 31 family. Mn(2+) is required as a cofactor.

The protein localises to the golgi apparatus membrane. It participates in protein modification; protein glycosylation. Its function is as follows. Beta-1,3-galactosyltransferase that transfers galactose from UDP-galactose to substrates with a terminal glycosyl residue. This chain is Probable beta-1,3-galactosyltransferase 5 (B3GALT5), found in Arabidopsis thaliana (Mouse-ear cress).